The sequence spans 431 residues: Enolase (431 aa).

Glutamine 167 lines the (2R)-2-phosphoglycerate pocket. The active-site Proton donor is glutamate 209. 3 residues coordinate Mg(2+): aspartate 246, glutamate 290, and aspartate 317. Residues lysine 342, arginine 371, serine 372, and lysine 393 each contribute to the (2R)-2-phosphoglycerate site. Lysine 342 functions as the Proton acceptor in the catalytic mechanism.

It belongs to the enolase family. In terms of assembly, component of the RNA degradosome, a multiprotein complex involved in RNA processing and mRNA degradation. It depends on Mg(2+) as a cofactor.

The protein resides in the cytoplasm. The protein localises to the secreted. Its subcellular location is the cell surface. It catalyses the reaction (2R)-2-phosphoglycerate = phosphoenolpyruvate + H2O. The protein operates within carbohydrate degradation; glycolysis; pyruvate from D-glyceraldehyde 3-phosphate: step 4/5. In terms of biological role, catalyzes the reversible conversion of 2-phosphoglycerate (2-PG) into phosphoenolpyruvate (PEP). It is essential for the degradation of carbohydrates via glycolysis. The sequence is that of Enolase from Erwinia tasmaniensis (strain DSM 17950 / CFBP 7177 / CIP 109463 / NCPPB 4357 / Et1/99).